The primary structure comprises 1050 residues: Integrin alpha-5 (1050 aa).

The N-terminal stretch at 1-32 (MQLPRGSRVPGLVATFLFPVLCALLTFSSVRG) is a signal peptide. The Extracellular segment spans residues 33–996 (FNLAVEQPAV…IHWAKPESSY (964 aa)). 7 FG-GAP repeats span residues 34 to 99 (NLAV…GTNC), 116 to 175 (DTPQ…NFTT), 183 to 235 (RTDF…QEAY), 249 to 301 (QTRQ…GTDL), 302 to 367 (RSLY…MEST), 368 to 426 (PHLI…GVDS), and 430 to 493 (QVLQ…ISPN). N-linked (GlcNAc...) asparagine glycosylation is found at Asn-75, Asn-95, and Asn-98. 2 disulfide bridges follow: Cys-90/Cys-99 and Cys-145/Cys-166. The N-linked (GlcNAc...) asparagine glycan is linked to Asn-172. A disulfide bridge links Cys-182 with Cys-195. Ca(2+) is bound by residues Glu-270, Ser-272, Asp-274, Thr-276, and Asp-278. Residues Asn-287, Asn-297, and Asn-306 are each glycosylated (N-linked (GlcNAc...) asparagine). The Ca(2+) site is built by Asp-324, Asn-326, Asp-328, Leu-330, Asp-332, Asp-390, Asp-392, Asp-394, Asp-398, Asp-454, Asp-456, Asn-458, Tyr-460, and Asp-462. Cys-502 and Cys-513 form a disulfide bridge. N-linked (GlcNAc...) asparagine glycosylation is found at Asn-507, Asn-515, Asn-521, and Asn-600. Cys-519 and Cys-575 form a disulfide bridge. A disulfide bond links Cys-636 and Cys-642. 4 N-linked (GlcNAc...) asparagine glycosylation sites follow: Asn-649, Asn-714, Asn-763, and Asn-861. Residues Cys-708 and Cys-721 are joined by a disulfide bond. 3 disulfides stabilise this stretch: Cys-839–Cys-958, Cys-862–Cys-922, and Cys-910–Cys-917. A helical transmembrane segment spans residues 997–1022 (GVPLWIIILAILIGLLLLALLIYVLY). Over 1023–1050 (KLGFFKRSYQYGTAMEKAELKPQAASEA) the chain is Cytoplasmic. Positions 1025 to 1029 (GFFKR) match the GFFKR motif motif.

The protein belongs to the integrin alpha chain family. Heterodimer of an alpha and a beta subunit. The alpha subunit is composed of a heavy and a light chain linked by a disulfide bond. Alpha-5 associates with beta-1.

It is found in the cell membrane. The protein localises to the cell junction. Its subcellular location is the focal adhesion. In terms of biological role, integrin alpha-5/beta-1 (ITGA5:ITGB1) is a receptor for fibronectin. It recognizes the sequence R-G-D in its ligands. ITGA5:ITGB1 acts as a receptor for fibrillin-1 (FBN1) and mediates R-G-D-dependent cell adhesion to FBN1. ITGA5:ITGB1 acts as a receptor for fibronectin (FN1) and mediates R-G-D-dependent cell adhesion to FN1. ITGA5:ITGB1 is a receptor for IL1B and binding is essential for IL1B signaling. ITGA5:ITGB3 is a receptor for soluble CD40LG and is required for CD40/CD40LG signaling. This Xenopus laevis (African clawed frog) protein is Integrin alpha-5 (itga5).